The chain runs to 232 residues: Vesicle transport through interaction with t-SNAREs homolog 1B (232 aa).

Alanine 2 carries the N-acetylalanine modification. 2 interaction with CLINT1 regions span residues 2–23 (ATSAASSEHFEKLHEIFRGLHE) and 69–73 (APLSF). Topologically, residues 2-208 (ATSAASSEHF…SRKVTTNKLL (207 aa)) are cytoplasmic. Residues 35-98 (MAGTEEKKKL…AKLHREVRST (64 aa)) are a coiled coil. The residue at position 103 (threonine 103) is a Phosphothreonine. Position 107 is an omega-N-methylarginine (arginine 107). Serine 138 bears the Phosphoserine mark. The stretch at 161 to 198 (SEIIEELGEQRDQLERTKSRLVNTSENLSKSRKILRSM) forms a coiled coil. Residues 209 to 229 (LSIVILLELAILGGLVYYKFL) traverse the membrane as a helical; Anchor for type IV membrane protein segment. At 230–232 (RRH) the chain is on the vesicular side.

It belongs to the VTI1 family. Forms a SNARE complex with STX7, STX8 and VAMP8 which functions in the homotypic fusion of late endosomes. Component of the SNARE complex composed of STX7, STX8, VAMP7 and VIT1B that is required for heterotypic fusion of late endosomes with lysosomes. May interact with STX17. Interacts with CLINT1.

It localises to the early endosome membrane. The protein resides in the late endosome membrane. It is found in the lysosome membrane. The protein localises to the cytoplasmic granule. Its subcellular location is the recycling endosome membrane. In terms of biological role, V-SNARE that mediates vesicle transport pathways through interactions with t-SNAREs on the target membrane. These interactions are proposed to mediate aspects of the specificity of vesicle trafficking and to promote fusion of the lipid bilayers. May be concerned with increased secretion of cytokines associated with cellular senescence. This is Vesicle transport through interaction with t-SNAREs homolog 1B (VTI1B) from Bos taurus (Bovine).